The sequence spans 356 residues: Protein HEXIM1 (356 aa).

Basic and acidic residues-rich tracts occupy residues 1 to 11 (MAEPLLTEHQH) and 24 to 47 (VHEE…DSRW). Residues 1 to 162 (MAEPLLTEHQ…RPSKKKRHWK (162 aa)) are disordered. Residues 48 to 58 (QSRASLQSGSR) show a composition bias toward polar residues. The span at 84–93 (SLEKGEKGQN) shows a compositional bias: basic and acidic residues. Phosphoserine is present on residues Ser-98 and Ser-103. The segment covering 145-162 (LGKKKHRRRPSKKKRHWK) has biased composition (basic residues). Residues 147-174 (KKKHRRRPSKKKRHWKPYYKLTWEEKKK) form a basic region; mediates nuclear localization and interaction with 7SK snRNA and NR3C1 region. The interval 199-202 (PYNT) is interaction with P-TEFb. Positions 207–247 (MDDHDQEEPDLKTGLYPKRAAAKSDDTSDEDFVEEAGEEDG) are autoinhibitory acidic region; in absence of 7SK snRNA interacts with the basic region preventing interaction with P-TEFb and modulating subcellular localization. The segment at 210–259 (HDQEEPDLKTGLYPKRAAAKSDDTSDEDFVEEAGEEDGGSDGMGGDGSEF) is disordered. Position 230 is a phosphoserine (Ser-230). Thr-233 is modified (phosphothreonine). A compositionally biased stretch (acidic residues) spans 233-248 (TSDEDFVEEAGEEDGG). Ser-234, Ser-249, and Ser-257 each carry phosphoserine. Positions 280–346 (SKQELIKEYL…LTENELHRQQ (67 aa)) form a coiled coil. A mediates interaction with CCNT1 region spans residues 283 to 311 (ELIKEYLELEKCLSRKEDENNRLRLESKR). The segment at 307 to 352 (LESKRLGGVDARVRELELELDRLRAENLQLLTENELHRQQERAPLS) is required for inhibition of ESR1-dependent transcription.

It belongs to the HEXIM family. As to quaternary structure, homooligomer and heterooligomer with HEXIM2; probably dimeric. Core component of the 7SK RNP complex, at least composed of 7SK RNA, LARP7, MEPCE, HEXIM1 (or HEXIM2) and P-TEFb (composed of CDK9 and CCNT1/cyclin-T1). Interacts with the N-CoR complex through NCOR1. Interacts with ESR1 and NR3C1. May interact with NF-kappa-B through RELA. Interacts with CCNT2; mediates formation of a tripartite complex with KPNA2. Part of the HDP-RNP complex composed of at least HEXIM1, PRKDC, XRCC5, XRCC6, paraspeckle proteins (SFPQ, NONO, PSPC1, RBM14, and MATR3) and NEAT1 non-coding RNA. As to expression, widely expressed with higher expression in heart, skeletal muscle and brain (at protein level).

The protein resides in the nucleus. It localises to the cytoplasm. Its function is as follows. Transcriptional regulator which functions as a general RNA polymerase II transcription inhibitor. Core component of the 7SK RNP complex: in cooperation with 7SK snRNA sequesters P-TEFb in a large inactive 7SK snRNP complex preventing RNA polymerase II phosphorylation and subsequent transcriptional elongation. May also regulate NF-kappa-B, ESR1, NR3C1 and CIITA-dependent transcriptional activity. Plays a role in the regulation of DNA virus-mediated innate immune response by assembling into the HDP-RNP complex, a complex that serves as a platform for IRF3 phosphorylation and subsequent innate immune response activation through the cGAS-STING pathway. This Mus musculus (Mouse) protein is Protein HEXIM1 (Hexim1).